A 488-amino-acid polypeptide reads, in one-letter code: Inosine-5'-monophosphate dehydrogenase (488 aa).

CBS domains are found at residues 95-153 (VISN…SIKI) and 157-216 (MTKE…AKDE). NAD(+) is bound by residues D250 and 300–302 (GIG). The K(+) site is built by G302 and G304. S305 is a binding site for IMP. C307 provides a ligand contact to K(+). C307 acts as the Thioimidate intermediate in catalysis. IMP is bound by residues 340–342 (DGG), 363–364 (GS), and 387–391 (YRGMG). R403 serves as the catalytic Proton acceptor. Residue E417 coordinates IMP. The disordered stretch occupies residues 467 to 488 (AGLAESHPHDVQITKESPNYSF). E471, S472, and H473 together coordinate K(+).

Belongs to the IMPDH/GMPR family. Homotetramer. It depends on K(+) as a cofactor.

The catalysed reaction is IMP + NAD(+) + H2O = XMP + NADH + H(+). It functions in the pathway purine metabolism; XMP biosynthesis via de novo pathway; XMP from IMP: step 1/1. Mycophenolic acid (MPA) is a non-competitive inhibitor that prevents formation of the closed enzyme conformation by binding to the same site as the amobile flap. In contrast, mizoribine monophosphate (MZP) is a competitive inhibitor that induces the closed conformation. MPA is a potent inhibitor of mammalian IMPDHs but a poor inhibitor of the bacterial enzymes. MZP is a more potent inhibitor of bacterial IMPDH. Its function is as follows. Catalyzes the conversion of inosine 5'-phosphate (IMP) to xanthosine 5'-phosphate (XMP), the first committed and rate-limiting step in the de novo synthesis of guanine nucleotides, and therefore plays an important role in the regulation of cell growth. This Staphylococcus saprophyticus subsp. saprophyticus (strain ATCC 15305 / DSM 20229 / NCIMB 8711 / NCTC 7292 / S-41) protein is Inosine-5'-monophosphate dehydrogenase.